Here is a 557-residue protein sequence, read N- to C-terminus: MGNHKAALTKQVFTFASELYAYGVREVVISPGSRSTPLALAFEAHPNIKTWIHPDERSAAFFAVGLIKGSERPVAILCTSGTAAANYTPAIAESQISRIPLIVLTSDRPHELRSVGAPQAINQVNMFNNYVSYEFDMPIADDSKETIDAIYYQMQIASQYLYGPHKGPIHFNLPFRDPLTPDLNATELLTSEMKILPHYQKSIDASALRHILNKKKGLIIVGDMQHQEVDQILTYSTIYDLPILADPLSHLRKFDHPNVICTYDLLFRSGLDLNVDFVIRVGKPVISKKLNQWLKKTDAFQILVQNNDKIDVFPIAPDISYEISANDFFRSLMEDTTVNRVSWLEKWQCLEKKGRKEIKCYLEQATDESAFVGELIKKTSEKDALFISNSMPIRDVDNLLLNKNIDVYANRGANGIDGIVSTALGMAVHKRITLLIGDLSFYHDMNGLLMSKLNNIQMNIVLLNNDGGGIFSYLPQKESATDYFERLFGTPTGLDFEYTAKLYQFDFKRFNSVSEFKNATLLSETSTIYELITNREDNFKQHQILYQKLSEMIHDTL.

Belongs to the TPP enzyme family. MenD subfamily. As to quaternary structure, homodimer. Requires Mg(2+) as cofactor. Mn(2+) is required as a cofactor. It depends on thiamine diphosphate as a cofactor.

The catalysed reaction is isochorismate + 2-oxoglutarate + H(+) = 5-enolpyruvoyl-6-hydroxy-2-succinyl-cyclohex-3-ene-1-carboxylate + CO2. Its pathway is quinol/quinone metabolism; 1,4-dihydroxy-2-naphthoate biosynthesis; 1,4-dihydroxy-2-naphthoate from chorismate: step 2/7. It functions in the pathway quinol/quinone metabolism; menaquinone biosynthesis. In terms of biological role, catalyzes the thiamine diphosphate-dependent decarboxylation of 2-oxoglutarate and the subsequent addition of the resulting succinic semialdehyde-thiamine pyrophosphate anion to isochorismate to yield 2-succinyl-5-enolpyruvyl-6-hydroxy-3-cyclohexene-1-carboxylate (SEPHCHC). This chain is 2-succinyl-5-enolpyruvyl-6-hydroxy-3-cyclohexene-1-carboxylate synthase, found in Staphylococcus aureus (strain USA300).